Reading from the N-terminus, the 690-residue chain is Methionine--tRNA ligase (690 aa).

Positions P12 to H22 match the 'HIGH' region motif. 4 residues coordinate Zn(2+): C143, C146, C156, and C159. The short motif at K328–S332 is the 'KMSKS' region element. Residue K331 coordinates ATP. The 109-residue stretch at D582 to K690 folds into the tRNA-binding domain.

The protein belongs to the class-I aminoacyl-tRNA synthetase family. MetG type 1 subfamily. Homodimer. Zn(2+) is required as a cofactor.

The protein localises to the cytoplasm. The enzyme catalyses tRNA(Met) + L-methionine + ATP = L-methionyl-tRNA(Met) + AMP + diphosphate. Its function is as follows. Is required not only for elongation of protein synthesis but also for the initiation of all mRNA translation through initiator tRNA(fMet) aminoacylation. In Thiobacillus denitrificans (strain ATCC 25259 / T1), this protein is Methionine--tRNA ligase.